A 450-amino-acid polypeptide reads, in one-letter code: Tubulin alpha-1 chain (450 aa).

Residues glutamine 11, glutamate 71, glycine 144, threonine 145, threonine 179, asparagine 206, and asparagine 228 each contribute to the GTP site. Glutamate 71 provides a ligand contact to Mg(2+). The active site involves glutamate 254.

This sequence belongs to the tubulin family. In terms of assembly, dimer of alpha and beta chains. A typical microtubule is a hollow water-filled tube with an outer diameter of 25 nm and an inner diameter of 15 nM. Alpha-beta heterodimers associate head-to-tail to form protofilaments running lengthwise along the microtubule wall with the beta-tubulin subunit facing the microtubule plus end conferring a structural polarity. Microtubules usually have 13 protofilaments but different protofilament numbers can be found in some organisms and specialized cells. It depends on Mg(2+) as a cofactor. Undergoes a tyrosination/detyrosination cycle, the cyclic removal and re-addition of a C-terminal tyrosine residue by the enzymes tubulin tyrosine carboxypeptidase (TTCP) and tubulin tyrosine ligase (TTL), respectively.

Its subcellular location is the cytoplasm. The protein resides in the cytoskeleton. The catalysed reaction is GTP + H2O = GDP + phosphate + H(+). In terms of biological role, tubulin is the major constituent of microtubules, a cylinder consisting of laterally associated linear protofilaments composed of alpha- and beta-tubulin heterodimers. Microtubules grow by the addition of GTP-tubulin dimers to the microtubule end, where a stabilizing cap forms. Below the cap, tubulin dimers are in GDP-bound state, owing to GTPase activity of alpha-tubulin. This is Tubulin alpha-1 chain (TUBA1) from Oryza sativa subsp. japonica (Rice).